The sequence spans 355 residues: Heat-inducible transcription repressor HrcA (355 aa).

Belongs to the HrcA family.

In terms of biological role, negative regulator of class I heat shock genes (grpE-dnaK-dnaJ and groELS operons). Prevents heat-shock induction of these operons. The polypeptide is Heat-inducible transcription repressor HrcA (Nitratidesulfovibrio vulgaris (strain DP4) (Desulfovibrio vulgaris)).